The sequence spans 230 residues: uncharacterized protein (230 aa).

Catalysis depends on charge relay system residues Ser-124 and His-158.

This sequence belongs to the peptidase S51 family.

This is an uncharacterized protein from Bacillus subtilis (strain 168).